The chain runs to 1341 residues: WD repeat-containing protein 19 (1341 aa).

WD repeat units follow at residues 11 to 51 (SWLG…RSEI), 52 to 92 (SLPG…TSQL), 95 to 134 (GMRD…KIPV), 137 to 175 (KHTK…IRQT), 273 to 311 (DHKD…DMYA), and 317 to 356 (DENK…LGDA). 6 TPR repeats span residues 736 to 769 (AQDL…AKRL), 775 to 808 (PFIS…DNKE), 840 to 873 (RVLK…DRAA), 895 to 928 (PKIH…NSVI), 951 to 984 (LDGA…NEAF), and 1020 to 1053 (EKRH…EDNV).

In terms of assembly, component of the IFT complex A (IFT-A) complex. IFT-A complex is divided into a core subcomplex composed of IFT122:IFT140:WDR19 which is associated with TULP3 and a peripheral subcomplex composed of IFT43:WDR35:TTC21B. Interacts (via C-terminal region) with IFT122 (via C-terminal region). Interacts with BBS1. Interacts with TTC25. As to expression, tissue-specific expression of isoforms. Expressed in the prostate, testis, epididymis, submaxillary and salivary glands. Expressed in ependymal cells lining brain ventricles (at protein level).

It localises to the cell projection. The protein resides in the cilium. Its subcellular location is the cytoplasm. It is found in the cytoskeleton. The protein localises to the cilium basal body. It localises to the photoreceptor outer segment. The protein resides in the flagellum. Its function is as follows. As component of the IFT complex A (IFT-A), a complex required for retrograde ciliary transport and entry into cilia of G protein-coupled receptors (GPCRs), it is involved in cilia function and/or assembly. Essential for functional IFT-A assembly and ciliary entry of GPCRs. Associates with the BBSome complex to mediate ciliary transport. The sequence is that of WD repeat-containing protein 19 from Mus musculus (Mouse).